The following is a 96-amino-acid chain: Elicitor peptide 3 (96 aa).

Residues 1 to 73 (MENLRNGEDN…EEEEEDGMTI (73 aa)) constitute a propeptide that is removed on maturation. Residues 32-96 (SGLESSSSSS…PSSGKGGKHN (65 aa)) form a disordered region. A compositionally biased stretch (low complexity) spans 35 to 49 (ESSSSSSSSCDLSSS). Over residues 52 to 71 (EEDESIDIKEEEEEEEEDGM) the composition is skewed to acidic residues.

It belongs to the brassicaceae elicitor peptide family.

Functionally, elicitor of plant defense. The sequence is that of Elicitor peptide 3 (PEP3) from Arabidopsis thaliana (Mouse-ear cress).